We begin with the raw amino-acid sequence, 411 residues long: MEFVKQADTEVFEAMQAEKNRQQDKIELIASENFVTKAVMDAMGSILTNKYAEGYPGKRYYGGCEHVDVVENLARDRAKELFGADHANVQPHSGAQANMAVYSAVLEPGDTVLGMNLNHGGHLTHGSPVNFSGQLYNFVDYGVDKETEQLDYDAVLEKAKEVKPKLIVAGASAYSRSINFAKFREIADAVDAYLMVDMAHIAGLVATGEHENPVPHADFVTTTTHKTLRGPRGGMILCKEEFAKKVDKAIFPGIQGGPLMHVIAAKAVSFKEALSDDFKAYSKQIVANAKLLGEALNKEGIRIVSGGTDNHLLLLDVTPLQLTGKVAEKALDDIGITTNKNTIPFDQESPFVTSGIRIGTAAVTTRGFGEEEMKEIASIISLTLKHHEDEAKLKEAAQRVQALTEKFTLYA.

Residues Leu-117 and 121–123 (GHL) contribute to the (6S)-5,6,7,8-tetrahydrofolate site. An N6-(pyridoxal phosphate)lysine modification is found at Lys-226. (6S)-5,6,7,8-tetrahydrofolate-binding positions include Glu-241 and 349–351 (SPF).

Belongs to the SHMT family. As to quaternary structure, homodimer. Pyridoxal 5'-phosphate is required as a cofactor.

It is found in the cytoplasm. The catalysed reaction is (6R)-5,10-methylene-5,6,7,8-tetrahydrofolate + glycine + H2O = (6S)-5,6,7,8-tetrahydrofolate + L-serine. It participates in one-carbon metabolism; tetrahydrofolate interconversion. Its pathway is amino-acid biosynthesis; glycine biosynthesis; glycine from L-serine: step 1/1. Its function is as follows. Catalyzes the reversible interconversion of serine and glycine with tetrahydrofolate (THF) serving as the one-carbon carrier. This reaction serves as the major source of one-carbon groups required for the biosynthesis of purines, thymidylate, methionine, and other important biomolecules. Also exhibits THF-independent aldolase activity toward beta-hydroxyamino acids, producing glycine and aldehydes, via a retro-aldol mechanism. This is Serine hydroxymethyltransferase from Oceanobacillus iheyensis (strain DSM 14371 / CIP 107618 / JCM 11309 / KCTC 3954 / HTE831).